The sequence spans 346 residues: Probable aldo-keto reductase 2 (346 aa).

Tyr63 serves as the catalytic Proton donor. His131 is a binding site for substrate. Ser210–Gly220 is a binding site for NADP(+).

It belongs to the aldo/keto reductase family. Aldo/keto reductase 13 subfamily.

The sequence is that of Probable aldo-keto reductase 2 (AGD2) from Arabidopsis thaliana (Mouse-ear cress).